An 817-amino-acid chain; its full sequence is B lymphocyte-induced maturation protein 1 homolog (817 aa).

Residues 1–62 (MGQGSGDDGV…PAGVSASGAR (62 aa)) are disordered. The span at 15–61 (FSSAAAAAHSPPHSPLSVGVSSASSATSSSSTPPSSTSPAGVSASGA) shows a compositional bias: low complexity. Residues 103-241 (MNLILKSSSK…ANTELSFWFS (139 aa)) form the SET domain. 4 consecutive C2H2-type zinc fingers follow at residues 508 to 530 (YACKDCNKTFGQLSNLKVHVRTH), 536 to 558 (FKCEICTKEFTQLAHLQKHHLVH), 564 to 586 (HRCDICDKRFSSTSNLKTHLRLH), and 592 to 614 (YTCDVCDAKFTQYVHLRLHKRLH). A C2H2-type 5; degenerate zinc finger spans residues 620–642 (YSCGTCGKKYISPSGLRTHWKTT). The tract at residues 709–817 (LLGQGPSGMQ…LPSLGLPHYP (109 aa)) is disordered. The segment covering 779 to 794 (QGGPSSGSGQQQHPQH) has biased composition (low complexity).

Interacts with dre-1; the interaction targets blmp-1 for proteasomal degradation. Interacts with ldb-1 and ham-3. Post-translationally, ubiquitinated by the SCF(dre-1) complex, leading to its degradation by the proteasome. As to expression, expressed in hypodermal, vulval, intestinal and distal tip cells.

The protein localises to the nucleus. It localises to the cytoplasm. Transcription factor which binds to enhancer elements in the promoter region of genes. Regulates the expression of the transcription factor bed-3 to control vulval development. Promotes terminal differentiation in the hypodermis and is involved in regulation of gonadal outgrowth and entry into the dauer stage. Regulates the timing of dorsalward migration of the distal tip cells of the hermaphrodite gonad by inhibiting precocious unc-5 and lin-29 expression which in turn prevents early dorsalward turning. Plays a role in male tail tip morphogenesis. The protein is B lymphocyte-induced maturation protein 1 homolog of Caenorhabditis elegans.